A 981-amino-acid polypeptide reads, in one-letter code: MSEQERIQECLRKEIRSLLISTKDGLSPQELEKEYLLMVGNHLPLRILGYRSTMELVLDMPDVVRVCPGAGGTVILKAIPDESTKGIASLVAKQRSSHKLRNSMHKGRPSIYSGPRSHRRVPYRGRVAPILPAVVKSELKDLLALSPVLLSDFEKAFAKRFGRSFQYMQYGFLSMFEVLNAASDVISVEQTRAGSLLMLKKSVTEEKPRGCPAGKIFTQPFRMKQGSYSTGFPVAKPCFSQPTSNMEPPKQIMSMEKTSKLNVVETSRLNHTEKLNQLENTFKSVIAQIGPGGTISSELKHKIKFVVSKFPEGLFISKLLGEYEVIFKEQLSPKKLGFLNVTELVGALSDILHVEFRKGHQDLLVFDADKKPLPPVQSDKKIEAKACVSSPPRNSLSTAAVKETVWNCPSKKQKEPQQKICKKPNLVVKPLQLQVETNKSELNLAMANHDIPPDAVPNKKLCRLPPLDTSSLIGVFVEYIISPSQFYIRIYSRDSSELLEDMMIEMRRCYSNQLVSDRYVMPECFIQPGHLCCVRISEDKWWYRVIIHRVLEKQEVEVFYPDFGNIGIVQKSSLRFLKCCYTKLPAQAIPCSLAWVRPVEEHWTSKAILQFQKLCGLKPLVGVVDEYVDGILNIFLCDTSSNEDVYFHHVLRTEGHAIVCRENISSKGFSELNPLALYTTSSGGPEDIVLTELGYPSQQHYFNEDRKISPQSKESELRILDEIPTGMPCLESVTIGDDIWDENWLPLQAKMGKGGDAASHLFTASLGGKNQYSSCKEMPQKDWCFSTPKDTWDDSWQPSGLVNGTKVEVHKPEVLGAQEKNTGTNRTQKQLDINGSSDSSTLPKLEEFCTSLTQSEQSADGSQSEPNNSQTQPKQIQLSTAAPCSTTAVDDSAEKPSGSVESSPEILKNEDFSSSRAITLYKDKRQESVDQLSLILSYECQISQKLYIPRSTATAALGAAARLATSRSLLHWYPSVKRMEA.

Positions 7–80 (IQECLRKEIR…GGTVILKAIP (74 aa)) constitute an HTH OST-type 1 domain. Basic residues predominate over residues 98 to 108 (HKLRNSMHKGR). The interval 98 to 118 (HKLRNSMHKGRPSIYSGPRSH) is disordered. HTH OST-type domains follow at residues 127-202 (VAPI…LKKS) and 295-369 (ISSE…FDAD). The Tudor domain maps to 525–584 (FIQPGHLCCVRISEDKWWYRVIIHRVLEKQEVEVFYPDFGNIGIVQKSSLRFLKCCYTKL). Residues 808–908 (EVHKPEVLGA…SVESSPEILK (101 aa)) form a disordered region. Polar residues-rich tracts occupy residues 819–842 (EKNT…SSTL) and 850–889 (TSLT…TTAV). Serine 892 is modified (phosphoserine).

The protein belongs to the TDRD5 family.

It localises to the cytoplasm. Functionally, required during spermiogenesis to participate in the repression transposable elements and prevent their mobilization, which is essential for the germline integrity. Probably acts via the piRNA metabolic process, which mediates the repression of transposable elements during meiosis by forming complexes composed of piRNAs and Piwi proteins and govern the methylation and subsequent repression of transposons. Required for chromatoid body (CB) assembly. The protein is Tudor domain-containing protein 5 (TDRD5) of Homo sapiens (Human).